A 117-amino-acid polypeptide reads, in one-letter code: uncharacterized protein (117 aa).

The protein belongs to the transposase 34 family.

This is an uncharacterized protein from Sinorhizobium fredii (strain NBRC 101917 / NGR234).